The chain runs to 636 residues: Threonine--tRNA ligase (636 aa).

A TGS domain is found at methionine 1–threonine 63. The tract at residues aspartate 245–proline 536 is catalytic. Residues cysteine 336, histidine 387, and histidine 513 each coordinate Zn(2+).

This sequence belongs to the class-II aminoacyl-tRNA synthetase family. As to quaternary structure, homodimer. Zn(2+) is required as a cofactor.

The protein resides in the cytoplasm. It carries out the reaction tRNA(Thr) + L-threonine + ATP = L-threonyl-tRNA(Thr) + AMP + diphosphate + H(+). Catalyzes the attachment of threonine to tRNA(Thr) in a two-step reaction: L-threonine is first activated by ATP to form Thr-AMP and then transferred to the acceptor end of tRNA(Thr). Also edits incorrectly charged L-seryl-tRNA(Thr). This chain is Threonine--tRNA ligase, found in Xanthomonas campestris pv. campestris (strain 8004).